Reading from the N-terminus, the 353-residue chain is Peptide methionine sulfoxide reductase MsrA/MsrB (353 aa).

A peptide methionine sulfoxide reductase A region spans residues 43–196; the sequence is REIYLAGGCF…PNGYCHIDIT (154 aa). Cysteine 51 is an active-site residue. Residues 213–336 enclose the MsrB domain; the sequence is DAELKAKLTP…NSASIKFIPL (124 aa). The active-site Nucleophile is cysteine 325.

In the N-terminal section; belongs to the MsrA Met sulfoxide reductase family. This sequence in the C-terminal section; belongs to the MsrB Met sulfoxide reductase family.

It carries out the reaction L-methionyl-[protein] + [thioredoxin]-disulfide + H2O = L-methionyl-(S)-S-oxide-[protein] + [thioredoxin]-dithiol. It catalyses the reaction [thioredoxin]-disulfide + L-methionine + H2O = L-methionine (S)-S-oxide + [thioredoxin]-dithiol. The catalysed reaction is L-methionyl-[protein] + [thioredoxin]-disulfide + H2O = L-methionyl-(R)-S-oxide-[protein] + [thioredoxin]-dithiol. In terms of biological role, has an important function as a repair enzyme for proteins that have been inactivated by oxidation. Catalyzes the reversible oxidation-reduction of methionine sulfoxide in proteins to methionine. The chain is Peptide methionine sulfoxide reductase MsrA/MsrB (msrAB) from Haemophilus influenzae (strain ATCC 51907 / DSM 11121 / KW20 / Rd).